The primary structure comprises 76 residues: Small ribosomal subunit protein bS16 (76 aa).

Belongs to the bacterial ribosomal protein bS16 family.

This chain is Small ribosomal subunit protein bS16, found in Helicobacter pylori (strain HPAG1).